Reading from the N-terminus, the 171-residue chain is Disulfide bond formation protein B (171 aa).

Over 1–8 (MRLSYRLV) the chain is Cytoplasmic. A helical membrane pass occupies residues 9-25 (SGLLVLASIVGMSFALY). Residues 26–43 (LEHVKGLEPCPLCIFQRV) are Periplasmic-facing. A disulfide bridge links Cys35 with Cys38. A helical transmembrane segment spans residues 44-60 (GLMAMGFVALIAFLHNP). Over 61–67 (VSNAIKR) the chain is Cytoplasmic. Residues 68–85 (FYAFLAGVAILWSVGVAG) traverse the membrane as a helical segment. At 86–142 (RHVWLQHLPPDQVPSCGPGLNYLIDALPMKTVLQEVLSGSGECAAIDWTFLGQSLPV) the chain is on the periplasmic side. Cysteines 101 and 128 form a disulfide. Residues 143-161 (WSLAYFLLLLLVCLWQLFR) traverse the membrane as a helical segment. The Cytoplasmic portion of the chain corresponds to 162–171 (FYPVFKTAKK).

The protein belongs to the DsbB family.

The protein resides in the cell inner membrane. Required for disulfide bond formation in some periplasmic proteins. Acts by oxidizing the DsbA protein. This is Disulfide bond formation protein B from Acinetobacter baumannii (strain ATCC 17978 / DSM 105126 / CIP 53.77 / LMG 1025 / NCDC KC755 / 5377).